The chain runs to 658 residues: Interferon-induced GTP-binding protein Mx1 (658 aa).

Methionine 1 carries the N-acetylmethionine modification. Positions 1–20 (MVNSKGKITDSDPGSSHLLL) are disordered. One can recognise a Dynamin-type G domain in the interval 65 to 338 (DLALPAIAVI…LITHICKTLP (274 aa)). The G1 motif stretch occupies residues 75 to 82 (GDQSSGKS). 75 to 82 (GDQSSGKS) is a binding site for GTP. The segment at 100–102 (VTR) is G2 motif. Residues 176–179 (DLPG) form a G3 motif region. Residues 176–180 (DLPGI) and 245–248 (TKPD) contribute to the GTP site. The interval 245-248 (TKPD) is G4 motif. The tract at residues 277–280 (KCRG) is G5 motif. Residues 339–364 (LLEKQIKENYEKITEELQKYGSDVPE) are bundle signaling element (BSE). The segment at 364-531 (EEEHEKMFFL…HFQMEQIVYC (168 aa)) is middle domain. Positions 365–628 (EEHEKMFFLI…KDTHNWLLKE (264 aa)) are stalk. Residues 551–554 (KDKK) are critical for lipid-binding. One can recognise a GED domain in the interval 570 to 658 (LSDIFEHLLA…ARRRLAKFPG (89 aa)).

The protein belongs to the TRAFAC class dynamin-like GTPase superfamily. Dynamin/Fzo/YdjA family. Homooligomer. Oligomerizes into multimeric filamentous or ring-like structures by virtue of its stalk domain. Oligomerization is critical for GTPase activity, protein stability, and recognition of viral target structures. Interacts with TRPC1, TRPC3, TRPC4, TRPC5, TRPC6 and TRPC7. Interacts with HSPA5. Interacts with TUBB/TUBB5. Interacts with DDX39A and DDX39B. In terms of processing, ISGylated.

It is found in the cytoplasm. Its subcellular location is the endoplasmic reticulum membrane. It localises to the perinuclear region. Functionally, interferon-induced dynamin-like GTPase with antiviral activity. The protein is Interferon-induced GTP-binding protein Mx1 (MX1) of Otaria byronia (South American sea lion).